A 183-amino-acid polypeptide reads, in one-letter code: Adenine phosphoribosyltransferase (183 aa).

Belongs to the purine/pyrimidine phosphoribosyltransferase family. As to quaternary structure, homodimer.

It localises to the cytoplasm. The enzyme catalyses AMP + diphosphate = 5-phospho-alpha-D-ribose 1-diphosphate + adenine. The protein operates within purine metabolism; AMP biosynthesis via salvage pathway; AMP from adenine: step 1/1. In terms of biological role, catalyzes a salvage reaction resulting in the formation of AMP, that is energically less costly than de novo synthesis. This Shewanella oneidensis (strain ATCC 700550 / JCM 31522 / CIP 106686 / LMG 19005 / NCIMB 14063 / MR-1) protein is Adenine phosphoribosyltransferase.